The sequence spans 324 residues: Sex-lethal homolog (324 aa).

RRM domains lie at 102 to 180 (TNLI…YARP) and 188 to 268 (TNLY…LAEE).

Expressed in somatic cells of both sexes throughout development, but not in the pole cells which are the progenitors of the germline.

It localises to the nucleus. Functionally, unknown; apparently not involved in somatic sex determination. The chain is Sex-lethal homolog (SXL) from Musca domestica (House fly).